Reading from the N-terminus, the 559-residue chain is uncharacterized protein (559 aa).

Disordered stretches follow at residues 315–360 and 454–559; these read TDDA…ERDI and DKID…STEN. Residues 320-329 are compositionally biased toward polar residues; it reads NENSDNSMNT. The span at 348–357 shows a compositional bias: acidic residues; it reads DNNDDSDDSE. Residues 433–495 adopt a coiled-coil conformation; that stretch reads ELKIQEMEKI…KRRQKRSQRS (63 aa). Basic and acidic residues predominate over residues 454–501; that stretch reads DKIDMDQIKSEMSRRRDESNKRRDEKRKDREEKRRQKRSQRSDTRKQG. A compositionally biased stretch (low complexity) spans 507-527; that stretch reads SDEATSDQTQSTDSNNTTQTA.

It localises to the virion. This is an uncharacterized protein from Acanthamoeba polyphaga mimivirus (APMV).